Reading from the N-terminus, the 180-residue chain is MTSTSQLFDPYAEALMAIAREQGLEDRFGEDAALFRSTLAASADLRHLLENPTLFSSQKKAVLNQVFGSSVHPLVLNFLNLLVDRNRIAFLDGIADRYQALLRKLRNVVRADVSSAVPLTEAQVQVITEKVKQLTGAAGVEIESQVDADLLGGVIIKVGSQVLDASLRGQLKRISISLAA.

It belongs to the ATPase delta chain family. F-type ATPases have 2 components, F(1) - the catalytic core - and F(0) - the membrane proton channel. F(1) has five subunits: alpha(3), beta(3), gamma(1), delta(1), epsilon(1). CF(0) has four main subunits: a(1), b(1), b'(1) and c(10-14). The alpha and beta chains form an alternating ring which encloses part of the gamma chain. F(1) is attached to F(0) by a central stalk formed by the gamma and epsilon chains, while a peripheral stalk is formed by the delta, b and b' chains.

It localises to the cellular thylakoid membrane. In terms of biological role, f(1)F(0) ATP synthase produces ATP from ADP in the presence of a proton or sodium gradient. F-type ATPases consist of two structural domains, F(1) containing the extramembraneous catalytic core and F(0) containing the membrane proton channel, linked together by a central stalk and a peripheral stalk. During catalysis, ATP synthesis in the catalytic domain of F(1) is coupled via a rotary mechanism of the central stalk subunits to proton translocation. Functionally, this protein is part of the stalk that links CF(0) to CF(1). It either transmits conformational changes from CF(0) to CF(1) or is implicated in proton conduction. The polypeptide is ATP synthase subunit delta (Synechococcus elongatus (strain ATCC 33912 / PCC 7942 / FACHB-805) (Anacystis nidulans R2)).